The following is a 59-amino-acid chain: Large ribosomal subunit protein uL30 (59 aa).

This sequence belongs to the universal ribosomal protein uL30 family. Part of the 50S ribosomal subunit.

This is Large ribosomal subunit protein uL30 from Solidesulfovibrio magneticus (strain ATCC 700980 / DSM 13731 / RS-1) (Desulfovibrio magneticus).